We begin with the raw amino-acid sequence, 458 residues long: Succinate-semialdehyde dehydrogenase [NADP(+)] 1 (458 aa).

Residues 134-135 (WN), 158-161 (KHAS), and 210-211 (GS) each bind NADP(+). The Proton acceptor role is filled by glutamate 232. NADP(+) is bound at residue leucine 233. Cysteine 266 acts as the Nucleophile in catalysis. Residue glutamate 363 coordinates NADP(+).

The protein belongs to the aldehyde dehydrogenase family.

The catalysed reaction is succinate semialdehyde + NADP(+) + H2O = succinate + NADPH + 2 H(+). In terms of biological role, catalyzes the NADP(+)-dependent oxidation of succinate semialdehyde to succinate. It is believed to be the main source of succinate semialdehyde dehydrogenase activity in Mycobacterium. This is Succinate-semialdehyde dehydrogenase [NADP(+)] 1 (gabD1) from Mycobacterium ulcerans (strain Agy99).